Consider the following 294-residue polypeptide: Cytidine deaminase (294 aa).

CMP/dCMP-type deaminase domains are found at residues 48 to 168 (DDNT…FGPN) and 187 to 294 (ETTD…YYTF). 89–91 (NME) provides a ligand contact to substrate. His102 provides a ligand contact to Zn(2+). Residue Glu104 is the Proton donor of the active site. 2 residues coordinate Zn(2+): Cys129 and Cys132.

This sequence belongs to the cytidine and deoxycytidylate deaminase family. As to quaternary structure, homodimer. Zn(2+) serves as cofactor.

The enzyme catalyses cytidine + H2O + H(+) = uridine + NH4(+). The catalysed reaction is 2'-deoxycytidine + H2O + H(+) = 2'-deoxyuridine + NH4(+). This enzyme scavenges exogenous and endogenous cytidine and 2'-deoxycytidine for UMP synthesis. The chain is Cytidine deaminase from Photorhabdus laumondii subsp. laumondii (strain DSM 15139 / CIP 105565 / TT01) (Photorhabdus luminescens subsp. laumondii).